Reading from the N-terminus, the 210-residue chain is Outer-membrane lipoprotein LolB (210 aa).

A signal peptide spans 1 to 26 (MSKLKIDTKRRFSLLIALVLIISLSS). C27 is lipidated: N-palmitoyl cysteine. C27 is lipidated: S-diacylglycerol cysteine.

The protein belongs to the LolB family. Monomer.

The protein localises to the cell outer membrane. Functionally, plays a critical role in the incorporation of lipoproteins in the outer membrane after they are released by the LolA protein. This Francisella tularensis subsp. holarctica (strain FTNF002-00 / FTA) protein is Outer-membrane lipoprotein LolB.